The primary structure comprises 431 residues: MGKNVVVLGTQWGDEGKGKIVDLLTQDAQVVVRYQGGHNAGHTLKINGVKTVLRLIPSGMLRPNVTCYIANGVVLSPQALLSEIKELEGNGVNVRERLRISLACPLILPYHIALDKARETHMGKSAIGTTGRGIGPAYEDKVARRALRVGDLFHRDRFANKLTELLDYHNFVLTQYFKQPAVDLESLLDESLQWAEELRPMVCDVSACLHEHRKQGENILFEGAQGVYLDIDHGTYPYVTSSNTCVGSVINGAGFGPRYIDYVLGITKAYTTRVGGGPFPTELLDDVGKRIAERGQEFGAVTGRPRRCGWFDAVLLKRSIELNSISGLCVTKLDVLDGLEVLRIAVAYKDRDGNILSRPPLAADDFDDLLPVYEELPGWQESTADVTVMSDLPANARAYLKRIEEILGIPIDLLSTGPERDSTITLRGPFL.

GTP is bound by residues 13-19 and 41-43; these read GDEGKGK and GHT. Asp14 acts as the Proton acceptor in catalysis. Asp14 and Gly41 together coordinate Mg(2+). IMP contacts are provided by residues 14–17, 39–42, Thr130, Arg144, Gln225, Thr240, and Arg304; these read DEGK and NAGH. The Proton donor role is filled by His42. 300-306 provides a ligand contact to substrate; the sequence is AVTGRPR. GTP contacts are provided by residues Arg306, 332–334, and 415–417; these read KLD and STG.

It belongs to the adenylosuccinate synthetase family. In terms of assembly, homodimer. Mg(2+) serves as cofactor.

It localises to the cytoplasm. It carries out the reaction IMP + L-aspartate + GTP = N(6)-(1,2-dicarboxyethyl)-AMP + GDP + phosphate + 2 H(+). It participates in purine metabolism; AMP biosynthesis via de novo pathway; AMP from IMP: step 1/2. Plays an important role in the de novo pathway of purine nucleotide biosynthesis. Catalyzes the first committed step in the biosynthesis of AMP from IMP. The polypeptide is Adenylosuccinate synthetase (Legionella pneumophila (strain Paris)).